Here is a 482-residue protein sequence, read N- to C-terminus: uncharacterized protein (482 aa).

The region spanning F231–D459 is the AB hydrolase-1 domain.

This is an uncharacterized protein from Caenorhabditis elegans.